The following is a 269-amino-acid chain: Glutamate racemase (269 aa).

Residues aspartate 13–serine 14 and tyrosine 45–serine 46 each bind substrate. Residue cysteine 77 is the Proton donor/acceptor of the active site. Residue asparagine 78–threonine 79 participates in substrate binding. Cysteine 188 functions as the Proton donor/acceptor in the catalytic mechanism. A substrate-binding site is contributed by threonine 189 to histidine 190.

This sequence belongs to the aspartate/glutamate racemases family.

The enzyme catalyses L-glutamate = D-glutamate. It functions in the pathway cell wall biogenesis; peptidoglycan biosynthesis. Provides the (R)-glutamate required for cell wall biosynthesis. The protein is Glutamate racemase of Pasteurella multocida (strain Pm70).